The chain runs to 320 residues: Apolipoprotein E (320 aa).

An N-terminal signal peptide occupies residues 1–18 (MKVLWAALLVAFLAGCQG). Tandem repeats lie at residues 82–103 (ALMEETMKELKAYKSELEEQLS), 104–125 (PVAEETRARLSKELQAAQARLG), 126–147 (ADMEDVRSRLAQYRSEVQAMLG), 148–169 (QSTDELRARLASHLRKLRKRLL), 170–191 (RDVDDLQKRLAVYQAGAREGAE), 192–213 (RGVSAIRERLGTLVEQGRARAA), 214–236 (TVGSSLASQPLQERAQAWGERLR), and 237–258 (ARMEEVGSRTRDRLDEVKEQVE). The segment at 82–258 (ALMEETMKEL…RLDEVKEQVE (177 aa)) is 8 X 22 AA approximate tandem repeats. Residue Met-145 is modified to Methionine sulfoxide. Position 149 is a phosphoserine (Ser-149). An LDL and other lipoprotein receptors binding region spans residues 160-170 (HLRKLRKRLLR). 164 to 167 (LRKR) contacts heparin. The tract at residues 212–293 (AATVGSSLAS…SWFEPLVEDM (82 aa)) is lipid-binding and lipoprotein association. Thr-214 carries O-linked (GalNAc...) threonine glycosylation. Position 232-239 (232-239 (GERLRARM)) interacts with heparin. The segment at 269 to 320 (QQMRLQAEAFQARLKSWFEPLVEDMQRQWAGLVEKVQAAVGASTTPVPSDNH) is homooligomerization. The segment at 281–293 (RLKSWFEPLVEDM) is specificity for association with VLDL.

The protein belongs to the apolipoprotein A1/A4/E family. In terms of assembly, homotetramer. May interact with ABCA1; functionally associated with ABCA1 in the biogenesis of HDLs. May interact with APP/A4 amyloid-beta peptide; the interaction is extremely stable in vitro but its physiological significance is unclear. May interact with MAPT. May interact with MAP2. In the cerebrospinal fluid, interacts with secreted SORL1. Interacts with PMEL; this allows the loading of PMEL luminal fragment on ILVs to induce fibril nucleation. In terms of processing, APOE exists as multiple glycosylated and sialylated glycoforms within cells and in plasma. The extent of glycosylation and sialylation are tissue and context specific. Post-translationally, glycated in plasma VLDL. Phosphorylated by FAM20C in the extracellular medium.

The protein resides in the secreted. It is found in the extracellular space. The protein localises to the extracellular matrix. Its subcellular location is the extracellular vesicle. It localises to the endosome. The protein resides in the multivesicular body. In terms of biological role, APOE is an apolipoprotein, a protein associating with lipid particles, that mainly functions in lipoprotein-mediated lipid transport between organs via the plasma and interstitial fluids. APOE is a core component of plasma lipoproteins and is involved in their production, conversion and clearance. Apolipoproteins are amphipathic molecules that interact both with lipids of the lipoprotein particle core and the aqueous environment of the plasma. As such, APOE associates with chylomicrons, chylomicron remnants, very low density lipoproteins (VLDL) and intermediate density lipoproteins (IDL) but shows a preferential binding to high-density lipoproteins (HDL). It also binds a wide range of cellular receptors including the LDL receptor/LDLR, the LDL receptor-related proteins LRP1, LRP2 and LRP8 and the very low-density lipoprotein receptor/VLDLR that mediate the cellular uptake of the APOE-containing lipoprotein particles. Finally, APOE also has a heparin-binding activity and binds heparan-sulfate proteoglycans on the surface of cells, a property that supports the capture and the receptor-mediated uptake of APOE-containing lipoproteins by cells. A main function of APOE is to mediate lipoprotein clearance through the uptake of chylomicrons, VLDLs, and HDLs by hepatocytes. APOE is also involved in the biosynthesis by the liver of VLDLs as well as their uptake by peripheral tissues ensuring the delivery of triglycerides and energy storage in muscle, heart and adipose tissues. By participating in the lipoprotein-mediated distribution of lipids among tissues, APOE plays a critical role in plasma and tissues lipid homeostasis. APOE is also involved in two steps of reverse cholesterol transport, the HDLs-mediated transport of cholesterol from peripheral tissues to the liver, and thereby plays an important role in cholesterol homeostasis. First, it is functionally associated with ABCA1 in the biogenesis of HDLs in tissues. Second, it is enriched in circulating HDLs and mediates their uptake by hepatocytes. APOE also plays an important role in lipid transport in the central nervous system, regulating neuron survival and sprouting. In Cebus capucinus (White-faced sapajou), this protein is Apolipoprotein E (APOE).